The following is a 100-amino-acid chain: Small ribosomal subunit protein uS14c (100 aa).

This sequence belongs to the universal ribosomal protein uS14 family. As to quaternary structure, part of the 30S ribosomal subunit.

The protein localises to the plastid. In terms of biological role, binds 16S rRNA, required for the assembly of 30S particles. This Cuscuta exaltata (Tall dodder) protein is Small ribosomal subunit protein uS14c.